The chain runs to 418 residues: Serine hydroxymethyltransferase (418 aa).

(6S)-5,6,7,8-tetrahydrofolate is bound by residues Leu-121 and 125 to 127 (GHL). Lys-230 is subject to N6-(pyridoxal phosphate)lysine. (6S)-5,6,7,8-tetrahydrofolate contacts are provided by residues Glu-246 and 355–357 (SPF).

It belongs to the SHMT family. In terms of assembly, homodimer. Pyridoxal 5'-phosphate serves as cofactor.

It is found in the cytoplasm. It catalyses the reaction (6R)-5,10-methylene-5,6,7,8-tetrahydrofolate + glycine + H2O = (6S)-5,6,7,8-tetrahydrofolate + L-serine. It functions in the pathway one-carbon metabolism; tetrahydrofolate interconversion. Its pathway is amino-acid biosynthesis; glycine biosynthesis; glycine from L-serine: step 1/1. Catalyzes the reversible interconversion of serine and glycine with tetrahydrofolate (THF) serving as the one-carbon carrier. This reaction serves as the major source of one-carbon groups required for the biosynthesis of purines, thymidylate, methionine, and other important biomolecules. Also exhibits THF-independent aldolase activity toward beta-hydroxyamino acids, producing glycine and aldehydes, via a retro-aldol mechanism. The polypeptide is Serine hydroxymethyltransferase (Streptococcus pneumoniae (strain ATCC 700669 / Spain 23F-1)).